The following is a 158-amino-acid chain: Phosphopantetheine adenylyltransferase (158 aa).

Position 9 (threonine 9) interacts with substrate. Residues 9-10 and histidine 17 contribute to the ATP site; that span reads TF. The substrate site is built by lysine 41, leucine 73, and arginine 87. ATP is bound by residues 88 to 90, glutamate 98, and 123 to 129; these read GVR and WSYVSST.

Belongs to the bacterial CoaD family. Homohexamer. Mg(2+) is required as a cofactor.

The protein resides in the cytoplasm. The catalysed reaction is (R)-4'-phosphopantetheine + ATP + H(+) = 3'-dephospho-CoA + diphosphate. It functions in the pathway cofactor biosynthesis; coenzyme A biosynthesis; CoA from (R)-pantothenate: step 4/5. Its function is as follows. Reversibly transfers an adenylyl group from ATP to 4'-phosphopantetheine, yielding dephospho-CoA (dPCoA) and pyrophosphate. This is Phosphopantetheine adenylyltransferase from Histophilus somni (strain 129Pt) (Haemophilus somnus).